The chain runs to 243 residues: UPF0246 protein M28_Spy1772 (243 aa).

The protein belongs to the UPF0246 family.

The protein is UPF0246 protein M28_Spy1772 of Streptococcus pyogenes serotype M28 (strain MGAS6180).